A 285-amino-acid polypeptide reads, in one-letter code: Bifunctional protein FolD (285 aa).

NADP(+) contacts are provided by residues G166–S168, S191, and I232.

This sequence belongs to the tetrahydrofolate dehydrogenase/cyclohydrolase family. As to quaternary structure, homodimer.

It carries out the reaction (6R)-5,10-methylene-5,6,7,8-tetrahydrofolate + NADP(+) = (6R)-5,10-methenyltetrahydrofolate + NADPH. The catalysed reaction is (6R)-5,10-methenyltetrahydrofolate + H2O = (6R)-10-formyltetrahydrofolate + H(+). Its pathway is one-carbon metabolism; tetrahydrofolate interconversion. Functionally, catalyzes the oxidation of 5,10-methylenetetrahydrofolate to 5,10-methenyltetrahydrofolate and then the hydrolysis of 5,10-methenyltetrahydrofolate to 10-formyltetrahydrofolate. The sequence is that of Bifunctional protein FolD from Actinobacillus pleuropneumoniae serotype 7 (strain AP76).